A 440-amino-acid chain; its full sequence is Protein OSB3, chloroplastic/mitochondrial (440 aa).

A chloroplast and mitochondrion-targeting transit peptide spans 1–61 (MNLISRTLTR…AKVSVKPPLN (61 aa)). Residues 80-178 (ISNWINLIGF…VMVQNLNFVQ (99 aa)) enclose the SSB domain. 3 PDF region regions span residues 218 to 270 (WKHL…LKLE), 294 to 342 (WKDL…SKLP), and 380 to 428 (WKNL…SKLP).

In terms of tissue distribution, expressed primarily in the female gametophyte and in the floral abscission zone.

It is found in the mitochondrion. The protein localises to the plastid. The protein resides in the chloroplast. Binds single-stranded DNA. This Arabidopsis thaliana (Mouse-ear cress) protein is Protein OSB3, chloroplastic/mitochondrial (OSB3).